Reading from the N-terminus, the 351-residue chain is Putative aryl-alcohol dehydrogenase C977.14c (351 aa).

Residue Ser-113 is modified to Phosphoserine.

It belongs to the aldo/keto reductase family. Aldo/keto reductase 2 subfamily.

The protein resides in the cytoplasm. It is found in the nucleus. This is Putative aryl-alcohol dehydrogenase C977.14c from Schizosaccharomyces pombe (strain 972 / ATCC 24843) (Fission yeast).